The primary structure comprises 403 residues: Phosphoglycerate kinase (403 aa).

Residues 21 to 23, Arg-36, 59 to 62, Arg-119, and Arg-154 contribute to the substrate site; these read DFN and HLGR. Residues Lys-207, Gly-299, Glu-330, and 357 to 360 each bind ATP; that span reads GGDA.

The protein belongs to the phosphoglycerate kinase family. Monomer.

Its subcellular location is the cytoplasm. It carries out the reaction (2R)-3-phosphoglycerate + ATP = (2R)-3-phospho-glyceroyl phosphate + ADP. It functions in the pathway carbohydrate degradation; glycolysis; pyruvate from D-glyceraldehyde 3-phosphate: step 2/5. The polypeptide is Phosphoglycerate kinase (Chlamydia trachomatis serovar A (strain ATCC VR-571B / DSM 19440 / HAR-13)).